A 499-amino-acid polypeptide reads, in one-letter code: Cytochrome P450 2M1 (499 aa).

C441 contacts heme.

It belongs to the cytochrome P450 family. Requires heme as cofactor. In kidney and in liver from juvenile and sexually mature trout from both sexes.

The protein localises to the endoplasmic reticulum membrane. Its subcellular location is the microsome membrane. The catalysed reaction is an organic molecule + reduced [NADPH--hemoprotein reductase] + O2 = an alcohol + oxidized [NADPH--hemoprotein reductase] + H2O + H(+). In terms of biological role, has (omega-6)-hydroxylation activity toward lauric acid. The sequence is that of Cytochrome P450 2M1 (cyp2m1) from Oncorhynchus mykiss (Rainbow trout).